An 87-amino-acid polypeptide reads, in one-letter code: Omega-lycotoxin-Am1d (87 aa).

An N-terminal signal peptide occupies residues Met1–Cys17. Residues Gln18 to Arg40 constitute a propeptide that is removed on maturation. 4 cysteine pairs are disulfide-bonded: Cys44–Cys59, Cys51–Cys64, Cys58–Cys84, and Cys66–Cys82.

Belongs to the neurotoxin omega-lctx family. In terms of tissue distribution, expressed by the venom gland.

The protein localises to the secreted. Modulates Cav2.1/CACNA1A voltage-gated calcium channels (P/Q-type currents) in rat cerebellar Purkinje cells and hippocampal CA1-CA3 neurons. At saturating concentrations (&gt;10 nM) decelerates activation kinetics and slightly increases peak amplitude without affecting deactivation kinetics. In vivo, does not cause death when intravenously injected into mice. In rat models, through its activity on Cav2.1/CACNA1A, has an ameliorative effect on memory defects provoked by hyperstimulation of N-methyl-D-aspartate receptors (NMDARs) in the hippocampus. The polypeptide is Omega-lycotoxin-Am1d (Alopecosa marikovskyi (Wolf spider)).